Reading from the N-terminus, the 540-residue chain is Chaperonin GroEL 2 (540 aa).

ATP-binding positions include 29-32 (TLGP), 86-90 (DGTTT), glycine 413, and aspartate 492. The tract at residues 521–540 (KPEKEKASVPGGGDMGGMDF) is disordered. Positions 530-540 (PGGGDMGGMDF) are enriched in gly residues.

This sequence belongs to the chaperonin (HSP60) family. As to quaternary structure, forms a cylinder of 14 subunits composed of two heptameric rings stacked back-to-back. Interacts with the co-chaperonin GroES.

Its subcellular location is the secreted. The protein localises to the capsule. The protein resides in the cell surface. It is found in the cell wall. It catalyses the reaction ATP + H2O + a folded polypeptide = ADP + phosphate + an unfolded polypeptide.. Together with its co-chaperonin GroES, plays an essential role in assisting protein folding. The GroEL-GroES system forms a nano-cage that allows encapsulation of the non-native substrate proteins and provides a physical environment optimized to promote and accelerate protein folding. This chain is Chaperonin GroEL 2, found in Mycobacterium tuberculosis (strain ATCC 25177 / H37Ra).